The sequence spans 1083 residues: uncharacterized protein (1083 aa).

Residues 93 to 145 (SKGNLRYVPTTSRNPSNTDTYSSSIDISSSSSSINTSDDSSGKTSSNDLSDMS) form a disordered region. A compositionally biased stretch (low complexity) spans 108-145 (SNTDTYSSSIDISSSSSSINTSDDSSGKTSSNDLSDMS).

It is found in the virion. This is an uncharacterized protein from Acanthamoeba polyphaga (Amoeba).